A 69-amino-acid chain; its full sequence is Large ribosomal subunit protein uL29 (69 aa).

This sequence belongs to the universal ribosomal protein uL29 family.

In Synechococcus sp. (strain CC9902), this protein is Large ribosomal subunit protein uL29.